We begin with the raw amino-acid sequence, 302 residues long: ATP synthase subunit b 1 (302 aa).

The helical transmembrane segment at 5 to 22 (WFTVIAQGINFLLLLWLL) threads the bilayer. A disordered region spans residues 278–302 (GLPENEGTDNPEANPPHAEAKIPHA).

Belongs to the ATPase B chain family. As to quaternary structure, F-type ATPases have 2 components, F(1) - the catalytic core - and F(0) - the membrane proton channel. F(1) has five subunits: alpha(3), beta(3), gamma(1), delta(1), epsilon(1). F(0) has three main subunits: a(1), b(2) and c(10-14). The alpha and beta chains form an alternating ring which encloses part of the gamma chain. F(1) is attached to F(0) by a central stalk formed by the gamma and epsilon chains, while a peripheral stalk is formed by the delta and b chains.

Its subcellular location is the cell inner membrane. Functionally, f(1)F(0) ATP synthase produces ATP from ADP in the presence of a proton or sodium gradient. F-type ATPases consist of two structural domains, F(1) containing the extramembraneous catalytic core and F(0) containing the membrane proton channel, linked together by a central stalk and a peripheral stalk. During catalysis, ATP synthesis in the catalytic domain of F(1) is coupled via a rotary mechanism of the central stalk subunits to proton translocation. In terms of biological role, component of the F(0) channel, it forms part of the peripheral stalk, linking F(1) to F(0). This chain is ATP synthase subunit b 1, found in Pseudoalteromonas atlantica (strain T6c / ATCC BAA-1087).